Here is a 161-residue protein sequence, read N- to C-terminus: MSGMYPQPLMMMPQQQRRPRKPRTKSAPKPPTTSKMSEKTKKEVTKSTMSTEKQIPMPTIPAASKGSLKDLDVRNNLNQQELNGIYYDTVNNLNACHGRMIFQPTGGSLTEGTLTVTIKLRVKSDQCLKMCSAFHKRNTNLETPLSAVDISKESEKSLGKD.

The span at 1–16 shows a compositional bias: low complexity; that stretch reads MSGMYPQPLMMMPQQQ. The segment at 1-52 is disordered; sequence MSGMYPQPLMMMPQQQRRPRKPRTKSAPKPPTTSKMSEKTKKEVTKSTMSTE. Positions 17 to 26 are enriched in basic residues; that stretch reads RRPRKPRTKS. A compositionally biased stretch (basic and acidic residues) spans 36-45; that stretch reads MSEKTKKEVT.

This sequence belongs to the torovirinae nucleoprotein family.

It is found in the virion. In terms of biological role, major structural component of virions that associates with genomic RNA. This is Nucleoprotein (N) from Blicca bjoerkna (white bream).